Reading from the N-terminus, the 100-residue chain is Integration host factor subunit alpha (100 aa).

It belongs to the bacterial histone-like protein family. Heterodimer of an alpha and a beta chain.

Functionally, this protein is one of the two subunits of integration host factor, a specific DNA-binding protein that functions in genetic recombination as well as in transcriptional and translational control. In Rhizorhabdus wittichii (strain DSM 6014 / CCUG 31198 / JCM 15750 / NBRC 105917 / EY 4224 / RW1) (Sphingomonas wittichii), this protein is Integration host factor subunit alpha.